The chain runs to 214 residues: Probable transaldolase 1 (214 aa).

The active-site Schiff-base intermediate with substrate is Lys83.

The protein belongs to the transaldolase family. Type 3B subfamily.

Its subcellular location is the cytoplasm. It carries out the reaction D-sedoheptulose 7-phosphate + D-glyceraldehyde 3-phosphate = D-erythrose 4-phosphate + beta-D-fructose 6-phosphate. It participates in carbohydrate degradation; pentose phosphate pathway; D-glyceraldehyde 3-phosphate and beta-D-fructose 6-phosphate from D-ribose 5-phosphate and D-xylulose 5-phosphate (non-oxidative stage): step 2/3. Transaldolase is important for the balance of metabolites in the pentose-phosphate pathway. The polypeptide is Probable transaldolase 1 (Listeria monocytogenes serotype 4b (strain F2365)).